The sequence spans 415 residues: MLRAAGNLSKSMMKSQRRFLNLQEFQSKEILEKHGCSVQNFVVASNRKEAEEKWMSFGDHEYVVKAQILAGGRGKGKFINGTKGIGGVFITKEKDAALEAIDEMIGKRLVTKQTTSEGVRVDKVMIAEGVDIKRETYLAVLMDRESNGPVVVASPDGGMDIEAVAEKTPERIFKTPIDIQMGMTEGQSLKIAKDLQFEGKLIGVAAQEIKRLYDLFIAVDATQVEINPLVETADGRVFCVDAKMNFDDSAAYRQKEIFAYETFEEHDPREVDAHQFNLNYIGMDGNIACLVNGAGLAMATMDLIKLHGGEPANFLDVGGAVTEDAVFNAVRIITSDPRVKCVLINIFGGIVNCATIANGVVSAVNKIGLNVPMVVRLEGTNVDAAKQIMKKSGLKILTANNLDEAAAKAVSSLPK.

The N-terminal 19 residues, 1-19, are a transit peptide targeting the mitochondrion; it reads MLRAAGNLSKSMMKSQRRF. The ATP-grasp domain maps to 28 to 258; sequence KEILEKHGCS…SAAYRQKEIF (231 aa). GTP is bound by residues glutamine 39, 72 to 74, and valine 130; that span reads GRG. Residues asparagine 227 and aspartate 241 each coordinate Mg(2+). Substrate contacts are provided by residues asparagine 292 and 349 to 351; that span reads GIV.

It belongs to the succinate/malate CoA ligase beta subunit family. GTP-specific subunit beta subfamily. In terms of assembly, heterodimer of an alpha and a beta subunit. The beta subunit determines specificity for GTP. Mg(2+) serves as cofactor.

The protein resides in the mitochondrion. It catalyses the reaction GTP + succinate + CoA = succinyl-CoA + GDP + phosphate. Its pathway is carbohydrate metabolism; tricarboxylic acid cycle; succinate from succinyl-CoA (ligase route): step 1/1. GTP-specific succinyl-CoA synthetase functions in the citric acid cycle (TCA), coupling the hydrolysis of succinyl-CoA to the synthesis of GTP and thus represents the only step of substrate-level phosphorylation in the TCA. The beta subunit provides nucleotide specificity of the enzyme and binds the substrate succinate, while the binding sites for coenzyme A and phosphate are found in the alpha subunit. The protein is Succinate--CoA ligase [GDP-forming] subunit beta, mitochondrial of Caenorhabditis elegans.